A 260-amino-acid chain; its full sequence is Indole-3-glycerol phosphate synthase (260 aa).

The protein belongs to the TrpC family.

It carries out the reaction 1-(2-carboxyphenylamino)-1-deoxy-D-ribulose 5-phosphate + H(+) = (1S,2R)-1-C-(indol-3-yl)glycerol 3-phosphate + CO2 + H2O. Its pathway is amino-acid biosynthesis; L-tryptophan biosynthesis; L-tryptophan from chorismate: step 4/5. In Desulfotalea psychrophila (strain LSv54 / DSM 12343), this protein is Indole-3-glycerol phosphate synthase.